A 218-amino-acid polypeptide reads, in one-letter code: MTTPNGMPDNPGDPENTDPEATSADRAEQAAEEAAARQAEESPFGQASEEEISPELEAEINDLLSDVDPDLDGDGEVSAVETQLAERTEDLQRVTAEYANYRRRTERERQGIIDTARAGVVTQLLPLLDDLDLAEQHGDLNEGPLKSLSDKLINILGGLKVESFGEIGEAFDPEIHEAVQDLSQGDVKVLGTVLRKGYRLGDRVIRTAMVLIGDPEES.

Residues 1–75 (MTTPNGMPDN…DVDPDLDGDG (75 aa)) form a disordered region. A compositionally biased stretch (basic and acidic residues) spans 23–40 (SADRAEQAAEEAAARQAE). Residues 48-75 (SEEEISPELEAEINDLLSDVDPDLDGDG) are compositionally biased toward acidic residues.

The protein belongs to the GrpE family. In terms of assembly, homodimer.

The protein resides in the cytoplasm. Its function is as follows. Participates actively in the response to hyperosmotic and heat shock by preventing the aggregation of stress-denatured proteins, in association with DnaK and GrpE. It is the nucleotide exchange factor for DnaK and may function as a thermosensor. Unfolded proteins bind initially to DnaJ; upon interaction with the DnaJ-bound protein, DnaK hydrolyzes its bound ATP, resulting in the formation of a stable complex. GrpE releases ADP from DnaK; ATP binding to DnaK triggers the release of the substrate protein, thus completing the reaction cycle. Several rounds of ATP-dependent interactions between DnaJ, DnaK and GrpE are required for fully efficient folding. The sequence is that of Protein GrpE from Corynebacterium glutamicum (strain ATCC 13032 / DSM 20300 / JCM 1318 / BCRC 11384 / CCUG 27702 / LMG 3730 / NBRC 12168 / NCIMB 10025 / NRRL B-2784 / 534).